Here is a 60-residue protein sequence, read N- to C-terminus: DNA gyrase inhibitor YacG (60 aa).

The Zn(2+) site is built by Cys-15, Cys-18, Cys-30, and Cys-34.

The protein belongs to the DNA gyrase inhibitor YacG family. As to quaternary structure, interacts with GyrB. Zn(2+) serves as cofactor.

In terms of biological role, inhibits all the catalytic activities of DNA gyrase by preventing its interaction with DNA. Acts by binding directly to the C-terminal domain of GyrB, which probably disrupts DNA binding by the gyrase. The chain is DNA gyrase inhibitor YacG from Bradyrhizobium diazoefficiens (strain JCM 10833 / BCRC 13528 / IAM 13628 / NBRC 14792 / USDA 110).